The primary structure comprises 1134 residues: Sterol regulatory element-binding protein 1 (1134 aa).

Positions 1–60 (MDELAFGEAALEQTLAEMCELDTAVLNDIEDMLQLINNQDSDFPGLFDAPYAGGETGDTG) are transcriptional activation (acidic). Residues 1–477 (MDELAFGEAA…HSRGMLDRSR (477 aa)) lie on the Cytoplasmic side of the membrane. The 9aaTAD motif lies at 27-35 (NDIEDMLQL). Residues 46–73 (LFDAPYAGGETGDTGPSSPGANSPESFS) are disordered. Polar residues predominate over residues 59 to 69 (TGPSSPGANSP). Ser-96 and Ser-115 each carry phosphoserine. 2 disordered regions span residues 130-149 (LQPA…SFPA) and 170-195 (SGTL…VLPT). Residues 170–179 (SGTLPGNTQQ) show a composition bias toward polar residues. The interval 227–487 (QQVPVVLQPH…LALCVLAFLC (261 aa)) is interaction with LMNA. In terms of domain architecture, bHLH spans 317–367 (EKRTAHNAIEKRYRSSINDKIVELKDLVVGTEAKLNKSAVLRKAIDYIRFL). A phosphoserine; by SIK1 mark is found at Ser-331 and Ser-332. Residues 367–388 (LQHSNQKLKQENLTLRSAHKSK) are leucine-zipper. Residue Ser-389 is modified to Phosphoserine; by AMPK. At Ser-395 the chain carries Phosphoserine; by SIK1. The tract at residues 415–468 (VETLTPPPSDAGSPSQSSPLSFGSRASSSGGSDSEPDSPAFEDSQVKAQRLPSH) is disordered. Over residues 424–453 (DAGSPSQSSPLSFGSRASSSGGSDSEPDSP) the composition is skewed to low complexity. Ser-448 is modified (phosphoserine). Residues 478–498 (LALCVLAFLCLTCNPLASLFG) traverse the membrane as a helical segment. Over 499–536 (WGILTPSDATGTHRSSGRSMLEAESRDGSNWTQWLLPP) the chain is Lumenal. Residues 537 to 557 (LVWLANGLLVLACLALLFVYG) traverse the membrane as a helical segment. Residues 558–1134 (EPVTRPHSGP…LGGGTTVTSS (577 aa)) are Cytoplasmic-facing. The residue at position 1047 (Ser-1047) is a Phosphoserine.

Belongs to the SREBP family. Forms a tight complex with SCAP, the SCAP-SREBP complex, in the endoplasmic reticulum membrane and the Golgi apparatus. Interacts with PAQR3; the interaction anchors the SCAP-SREBP complex to the Golgi apparatus in low cholesterol conditions. In terms of assembly, efficient DNA binding of the soluble transcription factor fragment requires dimerization with another bHLH protein. Interacts with CEBPA, the interaction produces a transcriptional synergy. Interacts with LMNA. Processed in the Golgi apparatus, releasing the protein from the membrane. At low cholesterol the SCAP-SREBP complex is recruited into COPII vesicles for export from the endoplasmic reticulum. In the Golgi, complex SREBPs are cleaved sequentially by site-1 (MBTPS1, S1P) and site-2 (MBTPS2, S2P) proteases. The first cleavage by site-1 protease occurs within the luminal loop, the second cleavage by site-2 protease occurs within the first transmembrane domain, releasing the transcription factor from the Golgi membrane. Post-translationally, phosphorylated by AMPK, leading to suppress protein processing and nuclear translocation, and repress target gene expression. Phosphorylation at Ser-389 by SIK1 represses activity possibly by inhibiting DNA-binding. In terms of processing, SCAP-free SREBF1 is ubiquitinated by the BCR(ARMC5) complex, leading to its degradation. Ubiquitinated; the nuclear form has a rapid turnover and is rapidly ubiquitinated and degraded by the proteasome in the nucleus. As to expression, predominant isoform expressed in most tissues. Predominates in liver, adrenal gland, brain and adipose tissue. Also found in kidney, thymus, testis, muscle, jejunum, and ileum. Expressed only in select tissues, such as intestinal epithelial, heart, macrophage and bone marrow dendritic cells. Also found in kidney, thymus, testis, muscle, jejunum, and ileum.

Its subcellular location is the endoplasmic reticulum membrane. It localises to the golgi apparatus membrane. It is found in the cytoplasmic vesicle. The protein resides in the COPII-coated vesicle membrane. The protein localises to the nucleus. Activation by cleavage is down-regulated upon activation of SIRT3-dependent PRKAA1/AMPK-alpha signaling cascade which leads to inhibition of ATP-consuming lipogenesis to restore cellular energy balance. Precursor of the transcription factor form (Processed sterol regulatory element-binding protein 1), which is embedded in the endoplasmic reticulum membrane. Low sterol concentrations promote processing of this form, releasing the transcription factor form that translocates into the nucleus and activates transcription of genes involved in cholesterol biosynthesis and lipid homeostasis. In terms of biological role, key transcription factor that regulates expression of genes involved in cholesterol biosynthesis and lipid homeostasis. Binds to the sterol regulatory element 1 (SRE-1) (5'-ATCACCCCAC-3'). Has dual sequence specificity binding to both an E-box motif (5'-ATCACGTGA-3') and to SRE-1 (5'-ATCACCCCAC-3'). Regulates the promoters of genes involved in cholesterol biosynthesis and the LDL receptor (LDLR) pathway of sterol regulation. Functionally, isoform expressed only in select tissues, which has higher transcriptional activity compared to SREBP-1C. Able to stimulate both lipogenic and cholesterogenic gene expression. Has a role in the nutritional regulation of fatty acids and triglycerides in lipogenic organs such as the liver. Required for innate immune response in macrophages by regulating lipid metabolism. Its function is as follows. Predominant isoform expressed in most tissues, which has weaker transcriptional activity compared to isoform SREBP-1A. Primarily controls expression of lipogenic gene. Strongly activates global lipid synthesis in rapidly growing cells. The chain is Sterol regulatory element-binding protein 1 from Mus musculus (Mouse).